We begin with the raw amino-acid sequence, 323 residues long: Serine racemase (323 aa).

3 residues coordinate ATP: Ser-32, Ser-33, and Lys-52. The Proton acceptor role is filled by Lys-57. The residue at position 57 (Lys-57) is a Lysino-D-alanine (Lys); alternate. Lys-57 carries the N6-(pyridoxal phosphate)lysine; alternate modification. A Ca(2+)-binding site is contributed by Thr-79. The active-site Proton acceptor is Ser-82. Pyridoxal 5'-phosphate is bound at residue Asn-84. 2 residues coordinate ATP: Gln-87 and Tyr-119. Asp-176 provides a ligand contact to Mg(2+). 5 residues coordinate pyridoxal 5'-phosphate: Gly-183, Gly-184, Gly-185, Gly-186, and Leu-187. 3 residues coordinate Ca(2+): Glu-208, Gly-212, and Asp-214. Residues Glu-208, Gly-212, and Asp-214 each coordinate Mg(2+). The Mn(2+) site is built by Glu-208, Gly-212, and Asp-214. ATP is bound at residue Lys-277. Ser-308 serves as a coordination point for pyridoxal 5'-phosphate. Asn-311 lines the ATP pocket.

It belongs to the serine/threonine dehydratase family. As to quaternary structure, homodimer. It depends on Mg(2+) as a cofactor. Requires Mn(2+) as cofactor. Ca(2+) serves as cofactor. Pyridoxal 5'-phosphate is required as a cofactor. In terms of processing, modification of the active site Lys by its substrate Ser to lysino-D-alanine reduces but does not abolish enzyme activity.

It carries out the reaction L-serine = D-serine. The enzyme catalyses L-serine = pyruvate + NH4(+). It catalyses the reaction D-serine = pyruvate + NH4(+). Allosterically activated by ATP, by magnesium, and possibly also by other divalent metal cations. In terms of biological role, catalyzes the synthesis of D-serine from L-serine. Has dehydratase activity towards both L-serine and D-serine. This is Serine racemase from Schizosaccharomyces pombe (strain 972 / ATCC 24843) (Fission yeast).